A 232-amino-acid chain; its full sequence is Ureidoacrylate amidohydrolase RutB (232 aa).

Residue D26 is the Proton acceptor of the active site. K135 is a catalytic residue. The Nucleophile role is filled by C168.

This sequence belongs to the isochorismatase family. RutB subfamily.

It catalyses the reaction (Z)-3-ureidoacrylate + H2O + H(+) = (Z)-3-aminoacrylate + NH4(+) + CO2. The enzyme catalyses (Z)-3-ureidoacrylate + H2O = (Z)-3-aminoacrylate + carbamate + H(+). The catalysed reaction is (Z)-2-methylureidoacrylate + H2O + H(+) = (Z)-2-methylaminoacrylate + NH4(+) + CO2. Hydrolyzes ureidoacrylate to form aminoacrylate and carbamate. The carbamate hydrolyzes spontaneously, thereby releasing one of the nitrogen atoms of the pyrimidine ring as ammonia and one of its carbon atoms as CO2. In Cronobacter turicensis (strain DSM 18703 / CCUG 55852 / LMG 23827 / z3032), this protein is Ureidoacrylate amidohydrolase RutB.